An 878-amino-acid chain; its full sequence is MADMYASLRSNVGTLGQILGETIRTNLDDAFLEKIEQIRQLAKSSRQGDEAARDEMLKLLTALPDNELVPFAKAFNQFLNLANIAEQFHTISRNCDELVCVPDPVEQLLGRVLSSNIDQEKMLDCLENLDIDLVLTAHPTEISRRTLIQKYASVIDILAALENPQLTEREKKQQHLRLRQLIAQIWHTNEIRNERPTPVDEARWGLSTIEVSLWQAIPDFLRQLNEQVEERTGKQLPTDIAPVRFSSWMGGDRDGNPFVTAKVTQEVLDRNRHTAARLYLKDIVVLVNDLSVEEANAELLEYTNNSLEPYRDVLKDLRQKLRNTVDYLNARLEGHSPEIDLSSIIWHESDLKEPLLMLYRSLTDSGMSLIAHGLLLDILRRIACFGIHMLRLDIRQDAERHSDVIAELTRYLGMGDYNHWDESEKQAFLLRELTGKRPLIPSNWQPSDDVAEVVSTCRLIATQPARALGSYVISMASKPSDVLTVLLLLKETGCPHPMRVVPLFETLDDLNNASSCMTALFAIDWYRGYTKGHQEVMIGYSDSAKDAGVMAAAWAQYHAQEELVEVSRQAEVKLTLFHGRGGTIGRGGGPAHEAILSQPPGSVDGRIRVTEQGEMIRFKFGLPKLAVQSLALYTSAVMEATLLPPPEPKPEWRACMQKLAEESVDAYRSIVRDEPDFVAYFRAATPEVELGKLPLGSRPAKRRVDGGIESLRAIPWIFAWSQNRLMLPAWLGAGEALQAASDRGEMALLQEMEQDWPFFKTRISMLEMVYAKAEPNLAKYYETCLVPENLHHLGEALRTRLATGIKAVLELTQSNALMEHTPWNRESVTLRNPYIDPLNFVQAELLARTRKEEEASTNVELALMITIAGVAAGMRNTG.

Active-site residues include H138 and K545.

It belongs to the PEPCase type 1 family. Requires Mg(2+) as cofactor.

It catalyses the reaction oxaloacetate + phosphate = phosphoenolpyruvate + hydrogencarbonate. Its function is as follows. Forms oxaloacetate, a four-carbon dicarboxylic acid source for the tricarboxylic acid cycle. This is Phosphoenolpyruvate carboxylase from Shewanella sediminis (strain HAW-EB3).